The primary structure comprises 57 residues: UPF0391 membrane protein RPA3029 (57 aa).

Transmembrane regions (helical) follow at residues 6-26 (WALIFLVVSIIAGIFGFTGIS) and 35-55 (ILFYVFVVIFVVLLILGFTIF).

This sequence belongs to the UPF0391 family.

The protein resides in the cell membrane. This chain is UPF0391 membrane protein RPA3029, found in Rhodopseudomonas palustris (strain ATCC BAA-98 / CGA009).